A 382-amino-acid polypeptide reads, in one-letter code: Prostaglandin D2 receptor 2 (382 aa).

Over 1-32 the chain is Extracellular; it reads MANVTLKPLCPLLEEMVQLPNHSNSSLRYIDH. 3 N-linked (GlcNAc...) asparagine glycosylation sites follow: asparagine 3, asparagine 21, and asparagine 24. Residues 33–55 form a helical membrane-spanning segment; that stretch reads VSVLLHGLASLLGLVENGLILFV. Over 56 to 66 the chain is Cytoplasmic; the sequence is VGCRMRQTVVT. Residues 67–88 form a helical membrane-spanning segment; the sequence is TWVLHLALSDLLAAASLPFFTY. The Extracellular portion of the chain corresponds to 89 to 105; sequence FLAVGHSWELGTTFCKL. Cysteine 103 and cysteine 181 are joined by a disulfide. The helical transmembrane segment at 106 to 126 threads the bilayer; the sequence is HSSVFFLNMFASGFLLSAISL. At 127-145 the chain is on the cytoplasmic side; it reads DRCLQVVRPVWAQNHRTVA. The chain crosses the membrane as a helical span at residues 146 to 167; that stretch reads VAHRVCLMLWALAVLNTIPYFV. Residues 168–209 are Extracellular-facing; that stretch reads FRDTIPRLDGRIMCYYNLLLWNPGPDRDTTCDYRQKALAVSK. Residues 210 to 230 form a helical membrane-spanning segment; the sequence is FLLAFMVPLAIIASSHVAVSL. The Cytoplasmic segment spans residues 231–246; sequence RLHHRGRQRTGRFVRL. A helical transmembrane segment spans residues 247 to 268; it reads VAAIVVAFVLCWGPYHIFSLLE. Residues 269-287 lie on the Extracellular side of the membrane; that stretch reads ARAHSVTTLRQLASRGLPF. Residues 288–307 traverse the membrane as a helical segment; it reads VTSLAFFNSVVNPLLYVFTC. Residues 308-357 lie on the Cytoplasmic side of the membrane; the sequence is PDMLYKLRRSLRAVLESVLVEDSDQSGGLRNRRRRASSTATPASTLLLAD. The Involved in the recycling of CRTH2 motif lies at 329 to 332; sequence DSDQ. Serine 330 and serine 344 each carry phosphoserine.

Belongs to the G-protein coupled receptor 1 family. Phosphorylated.

It is found in the cell membrane. Functionally, receptor for prostaglandin D2 (PGD2). Coupled to the G(i)-protein. Receptor activation may result in pertussis toxin-sensitive decreases in cAMP levels and Ca(2+) mobilization. PI3K signaling is also implicated in mediating PTGDR2 effects. PGD2 induced receptor internalization. CRTH2 internalization can be regulated by diverse kinases such as, PKC, PKA, GRK2, GPRK5/GRK5 and GRK6. Receptor activation is responsible, at least in part, in immune regulation and allergic/inflammation responses. This chain is Prostaglandin D2 receptor 2 (Ptgdr2), found in Mus musculus (Mouse).